The sequence spans 448 residues: tRNA modification GTPase MnmE (448 aa).

Positions 22, 79, and 118 each coordinate (6S)-5-formyl-5,6,7,8-tetrahydrofolate. The region spanning 214–371 (GLHVVLAGQP…LRQELLRIAG (158 aa)) is the TrmE-type G domain. Asn-224 lines the K(+) pocket. Residues 224-229 (NVGKSS), 243-249 (TPIAGTT), and 268-271 (DTAG) each bind GTP. Position 228 (Ser-228) interacts with Mg(2+). K(+) is bound by residues Thr-243, Ile-245, and Thr-248. Position 249 (Thr-249) interacts with Mg(2+). Lys-448 lines the (6S)-5-formyl-5,6,7,8-tetrahydrofolate pocket.

It belongs to the TRAFAC class TrmE-Era-EngA-EngB-Septin-like GTPase superfamily. TrmE GTPase family. In terms of assembly, homodimer. Heterotetramer of two MnmE and two MnmG subunits. Requires K(+) as cofactor.

The protein resides in the cytoplasm. In terms of biological role, exhibits a very high intrinsic GTPase hydrolysis rate. Involved in the addition of a carboxymethylaminomethyl (cmnm) group at the wobble position (U34) of certain tRNAs, forming tRNA-cmnm(5)s(2)U34. The sequence is that of tRNA modification GTPase MnmE from Dechloromonas aromatica (strain RCB).